The primary structure comprises 484 residues: UDP-N-acetylmuramoyl-L-alanyl-D-glutamate--2,6-diaminopimelate ligase (484 aa).

Ser30 provides a ligand contact to UDP-N-acetyl-alpha-D-muramoyl-L-alanyl-D-glutamate. 111–117 (GTNGKTT) serves as a coordination point for ATP. UDP-N-acetyl-alpha-D-muramoyl-L-alanyl-D-glutamate-binding positions include 153–154 (TT), Ser180, Gln186, and Arg188. Position 220 is an N6-carboxylysine (Lys220). Meso-2,6-diaminopimelate-binding positions include Arg378, 402 to 405 (DNPR), Gly455, and Glu459. The Meso-diaminopimelate recognition motif motif lies at 402 to 405 (DNPR).

It belongs to the MurCDEF family. MurE subfamily. Mg(2+) is required as a cofactor. In terms of processing, carboxylation is probably crucial for Mg(2+) binding and, consequently, for the gamma-phosphate positioning of ATP.

It localises to the cytoplasm. The catalysed reaction is UDP-N-acetyl-alpha-D-muramoyl-L-alanyl-D-glutamate + meso-2,6-diaminopimelate + ATP = UDP-N-acetyl-alpha-D-muramoyl-L-alanyl-gamma-D-glutamyl-meso-2,6-diaminopimelate + ADP + phosphate + H(+). The protein operates within cell wall biogenesis; peptidoglycan biosynthesis. Catalyzes the addition of meso-diaminopimelic acid to the nucleotide precursor UDP-N-acetylmuramoyl-L-alanyl-D-glutamate (UMAG) in the biosynthesis of bacterial cell-wall peptidoglycan. This is UDP-N-acetylmuramoyl-L-alanyl-D-glutamate--2,6-diaminopimelate ligase from Phocaeicola vulgatus (strain ATCC 8482 / DSM 1447 / JCM 5826 / CCUG 4940 / NBRC 14291 / NCTC 11154) (Bacteroides vulgatus).